A 316-amino-acid polypeptide reads, in one-letter code: Methionyl-tRNA formyltransferase (316 aa).

111-114 contributes to the (6S)-5,6,7,8-tetrahydrofolate binding site; the sequence is SLLP.

Belongs to the Fmt family.

It carries out the reaction L-methionyl-tRNA(fMet) + (6R)-10-formyltetrahydrofolate = N-formyl-L-methionyl-tRNA(fMet) + (6S)-5,6,7,8-tetrahydrofolate + H(+). Its function is as follows. Attaches a formyl group to the free amino group of methionyl-tRNA(fMet). The formyl group appears to play a dual role in the initiator identity of N-formylmethionyl-tRNA by promoting its recognition by IF2 and preventing the misappropriation of this tRNA by the elongation apparatus. The protein is Methionyl-tRNA formyltransferase of Limosilactobacillus fermentum (strain NBRC 3956 / LMG 18251) (Lactobacillus fermentum).